A 34-amino-acid chain; its full sequence is Histone H1, sperm (34 aa).

The interval 1–34 (PASPQKRAASPRRSPKKSPRKSPKKSPRKRSASP) is disordered. The span at 9–34 (ASPRRSPKKSPRKSPKKSPRKRSASP) shows a compositional bias: basic residues.

The protein belongs to the histone H1/H5 family. In terms of tissue distribution, sperm.

It is found in the nucleus. The protein resides in the chromosome. Functionally, histones H1 are necessary for the condensation of nucleosome chains into higher-order structures. The protein is Histone H1, sperm of Strongylocentrotus purpuratus (Purple sea urchin).